The chain runs to 194 residues: MRKWILTWILPSLLYRSCFHIICLVGTISLACNDMTPEQMATNVNCSSPERHTRSYDYMEGGDIRVRRLFCRTQWYLRIDKRGKVKGTQEMKNNYNIMEIRTVAVGIVAIKGVESEYYLAMNKEGKLYAKKECNEDCNFKELILENHYNTYASAKWTHSGGEMFVALNSKGVPVRGKKTKKEQKTAHFLPMAIT.

A signal peptide spans 1 to 31 (MRKWILTWILPSLLYRSCFHIICLVGTISLA). The N-linked (GlcNAc...) asparagine glycan is linked to Asn45.

Belongs to the heparin-binding growth factors family. In terms of assembly, interacts with FGFBP1. Interacts with FGFR2. Affinity between fibroblast growth factors (FGFs) and their receptors is increased by heparan sulfate glycosaminoglycans that function as coreceptors.

In terms of biological role, plays an important role in the regulation of embryonic development, cell proliferation and cell differentiation. Required for normal branching morphogenesis. Growth factor active on keratinocytes. Possible major paracrine effector of normal epithelial cell proliferation. This chain is Fibroblast growth factor 7 (FGF7), found in Ovis aries (Sheep).